Here is a 47-residue protein sequence, read N- to C-terminus: Photosystem II reaction center protein K (47 aa).

Residues 1–10 constitute a propeptide that is removed on maturation; it reads MALINFDLLA. The helical transmembrane segment at 26 to 46 threads the bilayer; sequence LPLIPLFFFLLVFVWQAAVGF.

Belongs to the PsbK family. PSII is composed of 1 copy each of membrane proteins PsbA, PsbB, PsbC, PsbD, PsbE, PsbF, PsbH, PsbI, PsbJ, PsbK, PsbL, PsbM, PsbT, PsbX, PsbY, Psb30/Ycf12, peripheral proteins PsbO, CyanoQ (PsbQ), PsbU, PsbV and a large number of cofactors. It forms dimeric complexes.

The protein localises to the cellular thylakoid membrane. In terms of biological role, one of the components of the core complex of photosystem II (PSII). PSII is a light-driven water:plastoquinone oxidoreductase that uses light energy to abstract electrons from H(2)O, generating O(2) and a proton gradient subsequently used for ATP formation. It consists of a core antenna complex that captures photons, and an electron transfer chain that converts photonic excitation into a charge separation. In Prochlorococcus marinus (strain NATL2A), this protein is Photosystem II reaction center protein K.